Reading from the N-terminus, the 30-residue chain is Dendrotoxin A (30 aa).

A disulfide bridge links C3 with C22.

Belongs to the three-finger toxin family. Short-chain subfamily. Acn-esterase inhibitor sub-subfamily. In terms of processing, contains 4 disulfide bonds. As to expression, expressed by the venom gland.

It is found in the secreted. Its function is as follows. Inhibits acetylcholinesterase. Has been described to inhibit both the slowly and the rapidly inactivating phases of potassium efflux. This Dendroaspis angusticeps (Eastern green mamba) protein is Dendrotoxin A.